A 90-amino-acid polypeptide reads, in one-letter code: Progonadoliberin-3 (90 aa).

A signal peptide spans methionine 1–serine 23. Glutamine 24 carries the pyrrolidone carboxylic acid modification. Glycine 33 bears the Glycine amide mark.

It belongs to the GnRH family.

The protein localises to the secreted. In terms of biological role, stimulates the secretion of gonadotropins. In Pagrus major (Red sea bream), this protein is Progonadoliberin-3 (gnrh3).